Consider the following 198-residue polypeptide: Single-stranded DNA cytosine deaminase (198 aa).

A Bipartite nuclear localization signal motif is present at residues Met1–Cys30. The interaction with SUPT6H stretch occupies residues Asp2–Glu26. The 107-residue stretch at Gly23–Leu129 folds into the CMP/dCMP-type deaminase domain. Thr27 bears the Phosphothreonine; by PKA mark. At Ser38 the chain carries Phosphoserine; by PKA. The interval Ala39–Phe42 is important for interaction with CTNNBL1. His56 is a Zn(2+) binding site. Glu58 acts as the Proton donor in catalysis. Cys87 and Cys90 together coordinate Zn(2+). Residues Tyr88–Cys116 are required for interaction with RNF126. Residues Leu183–Leu198 carry the Nuclear export signal motif.

The protein belongs to the cytidine and deoxycytidylate deaminase family. In terms of assembly, interacts with CTNNBL1; the interaction is important for the immunoglobulin switch activity of AICDA. Interacts (via its NLS) with KPNA1. Interacts with PKA/PRKACA and PRKAR1A/PKR1. Interacts with SUPT6H, TRIM28 and NCL. Directly interacts with MCM3AP; this interaction may favor AICDA recruitment to immunoglobulin variable region genes, hence promoting somatic hypermutations. It depends on Zn(2+) as a cofactor. Post-translationally, ser-38 is the major site whereas Thr-27 is the minor site of phosphorylation. Phosphorylation regulates its class-switch recombination activity. Probably monoubiquitinated on several residues by RNF126. In terms of tissue distribution, expressed in thymus, lung, spleen, kidney, small intestine, lymph node and tonsil.

It localises to the nucleus. The protein localises to the cytoplasm. It carries out the reaction a 2'-deoxycytidine in single-stranded DNA + H2O + H(+) = a 2'-deoxyuridine in single-stranded DNA + NH4(+). Functionally, single-stranded DNA-specific cytidine deaminase. Involved in somatic hypermutation (SHM), gene conversion, and class-switch recombination (CSR) in B-lymphocytes by deaminating C to U during transcription of Ig-variable (V) and Ig-switch (S) region DNA. Required for several crucial steps of B-cell terminal differentiation necessary for efficient antibody responses. May also play a role in the epigenetic regulation of gene expression by participating in DNA demethylation. The protein is Single-stranded DNA cytosine deaminase (AICDA) of Canis lupus familiaris (Dog).